Consider the following 54-residue polypeptide: Large ribosomal subunit protein bL33A (54 aa).

This sequence belongs to the bacterial ribosomal protein bL33 family.

This Mycobacteroides abscessus (strain ATCC 19977 / DSM 44196 / CCUG 20993 / CIP 104536 / JCM 13569 / NCTC 13031 / TMC 1543 / L948) (Mycobacterium abscessus) protein is Large ribosomal subunit protein bL33A.